Consider the following 403-residue polypeptide: MEQIPFVSSSPNTLGIELELQLIDPAGFDLAAASDELLAQLANHPVADRIKPEITRSMIELNSSVHEHPAGLLAEMREMRDALCEAADAVGVSVSGGGTHPFMRWQERTISDTPRFQYLAEMYGYLARQFTVFGQHIHLGVPSGDAAVRLVHGLSPYVPHFIALSASSPYREGVDTLFSCARLNAVNSFPLAGHLPPEVADWYHFEAHIAQLRASGLAESIKDLYWDIRPKPEFGTVEIRVCDTPLTVERACQLAAFAQALAVLLEREPSPPTQAWLAYRSNHFQACRFGLHGSYVTPGGQRVRLADHLKALFVRLMPVAEELGTTDILQSLRDEMQRGGNDARWLRAQFHRTRELSGTVEAMTQVFRGESAAQRRAPQAARRRIRASSEPLGPMSMWPERLH.

A disordered region spans residues 370–403 (ESAAQRRAPQAARRRIRASSEPLGPMSMWPERLH).

Belongs to the glutamate--cysteine ligase type 2 family. YbdK subfamily.

The enzyme catalyses L-cysteine + L-glutamate + ATP = gamma-L-glutamyl-L-cysteine + ADP + phosphate + H(+). ATP-dependent carboxylate-amine ligase which exhibits weak glutamate--cysteine ligase activity. This chain is Putative glutamate--cysteine ligase 2, found in Bordetella avium (strain 197N).